The sequence spans 223 residues: Putative 3-methyladenine DNA glycosylase (223 aa).

The protein belongs to the DNA glycosylase MPG family.

The sequence is that of Putative 3-methyladenine DNA glycosylase from Pseudomonas syringae pv. tomato (strain ATCC BAA-871 / DC3000).